The following is a 334-amino-acid chain: Tetratricopeptide repeat protein 24 (334 aa).

TPR repeat units lie at residues 35–68, 72–105, 112–145, and 152–185; these read GPFYNDLGMGYFQLQLFPLAVEAFLQALPLCRQP, ATVLQNLGMTHNVLGNYWEAQEFHQKAASLHGSV, GRSFSGLAFSLSQLGDHRAAWDSYLHALQAAQDT, and WQACEGLGAAAARLGQHDQALKYYKEALALCQHE. Residues 220–258 are disordered; the sequence is PGKLQTSRKAKTSARVQSSAEDAQESQWEGEASEGGHEK. The span at 233–246 shows a compositional bias: polar residues; that stretch reads ARVQSSAEDAQESQ.

In Mus musculus (Mouse), this protein is Tetratricopeptide repeat protein 24 (Ttc24).